A 247-amino-acid chain; its full sequence is LOB domain-containing protein 38 (247 aa).

An LOB domain is found at 1–107 (MSCNGCRVLR…VETVLRGGSL (107 aa)). Low complexity predominate over residues 157–170 (FSSSRSRSRSTASP). Residues 157-184 (FSSSRSRSRSTASPPKRKRLSSEQQPSS) are disordered.

Belongs to the LOB domain-containing protein family. In terms of tissue distribution, expressed in young shoots, roots, stems, leaves and flowers.

The polypeptide is LOB domain-containing protein 38 (LBD38) (Arabidopsis thaliana (Mouse-ear cress)).